A 788-amino-acid polypeptide reads, in one-letter code: Protein kintoun (788 aa).

Disordered stretches follow at residues 194-249 (LRKP…SEQD), 415-438 (NNSE…EISP), and 628-754 (HKEH…SSSV). Over residues 225–241 (GKEKKDQKRVIKEEHKQ) the composition is skewed to basic and acidic residues. Residues 417-427 (SEGLTSESNLD) are compositionally biased toward polar residues. Basic and acidic residues-rich tracts occupy residues 628 to 644 (HKEH…DVGV) and 667 to 682 (ENTE…RYEE). Composition is skewed to polar residues over residues 685-701 (STSC…QKDS) and 744-754 (NFDSRPASSSV).

It belongs to the PIH1 family. Kintoun subfamily.

The protein localises to the cytoplasm. Its subcellular location is the dynein axonemal particle. Its function is as follows. Required for cytoplasmic pre-assembly of axonemal dyneins, thereby playing a central role in motility in cilia and flagella. Involved in pre-assembly of dynein arm complexes in the cytoplasm before intraflagellar transport loads them for the ciliary compartment. In Xenopus laevis (African clawed frog), this protein is Protein kintoun.